A 373-amino-acid chain; its full sequence is Phosphoserine aminotransferase (373 aa).

Position 47 (Arg-47) interacts with L-glutamate. Pyridoxal 5'-phosphate is bound by residues 81–82 (AR), Trp-113, Thr-164, Asp-185, and Gln-208. The residue at position 209 (Lys-209) is an N6-(pyridoxal phosphate)lysine. 250–251 (NT) contributes to the pyridoxal 5'-phosphate binding site.

It belongs to the class-V pyridoxal-phosphate-dependent aminotransferase family. SerC subfamily. As to quaternary structure, homodimer. The cofactor is pyridoxal 5'-phosphate.

Its subcellular location is the cytoplasm. The enzyme catalyses O-phospho-L-serine + 2-oxoglutarate = 3-phosphooxypyruvate + L-glutamate. It catalyses the reaction 4-(phosphooxy)-L-threonine + 2-oxoglutarate = (R)-3-hydroxy-2-oxo-4-phosphooxybutanoate + L-glutamate. It functions in the pathway amino-acid biosynthesis; L-serine biosynthesis; L-serine from 3-phospho-D-glycerate: step 2/3. Its pathway is cofactor biosynthesis; pyridoxine 5'-phosphate biosynthesis; pyridoxine 5'-phosphate from D-erythrose 4-phosphate: step 3/5. Its function is as follows. Catalyzes the reversible conversion of 3-phosphohydroxypyruvate to phosphoserine and of 3-hydroxy-2-oxo-4-phosphonooxybutanoate to phosphohydroxythreonine. This Buchnera aphidicola subsp. Baizongia pistaciae (strain Bp) protein is Phosphoserine aminotransferase.